Reading from the N-terminus, the 707-residue chain is DNA ligase (707 aa).

NAD(+)-binding positions include 48–52 (DAEYD), 97–98 (SI), and glutamate 134. Catalysis depends on lysine 136, which acts as the N6-AMP-lysine intermediate. NAD(+) contacts are provided by arginine 157, glutamate 193, lysine 320, and lysine 344. Cysteine 438, cysteine 441, cysteine 456, and cysteine 462 together coordinate Zn(2+). In terms of domain architecture, BRCT spans 621 to 707 (VAPKPLSGKT…DSPPDERIPA (87 aa)).

It belongs to the NAD-dependent DNA ligase family. LigA subfamily. It depends on Mg(2+) as a cofactor. The cofactor is Mn(2+).

The catalysed reaction is NAD(+) + (deoxyribonucleotide)n-3'-hydroxyl + 5'-phospho-(deoxyribonucleotide)m = (deoxyribonucleotide)n+m + AMP + beta-nicotinamide D-nucleotide.. Its function is as follows. DNA ligase that catalyzes the formation of phosphodiester linkages between 5'-phosphoryl and 3'-hydroxyl groups in double-stranded DNA using NAD as a coenzyme and as the energy source for the reaction. It is essential for DNA replication and repair of damaged DNA. The chain is DNA ligase from Polaromonas naphthalenivorans (strain CJ2).